The following is a 459-amino-acid chain: ATP-dependent RNA helicase me31b (459 aa).

Residues 1-267 are recA-like domain 1; the sequence is MMTEKLNSGH…EINLMEELTL (267 aa). Phosphoserine occurs at positions 8 and 29. The Q motif signature appears at 58-86; it reads NEFEEFCLKRELLMGIFEKGWERPSPIQE. In terms of domain architecture, Helicase ATP-binding spans 89 to 259; sequence IPIALSGKDV…EKHLREPYEI (171 aa). 102-109 contributes to the ATP binding site; it reads AKNGTGKT. The short motif at 207-210 is the DEAD box element; it reads DEAD. Residues 264-431 are gyf binding; that stretch reads ELTLKGVTQY…PKVIDPALYV (168 aa). The region spanning 269-429 is the Helicase C-terminal domain; the sequence is GVTQYYAFVQ…PIPKVIDPAL (161 aa). Positions 432–459 are recA-like domain 2; that stretch reads ANVGASVGDTCNNSDLNNSANEEGNVSK. Ser-450 is modified (phosphoserine).

The protein belongs to the DEAD box helicase family. DDX6/DHH1 subfamily. Conserved component of different types of multiprotein ribonucleoprotein complexes (RNPs) that form distinct germ granules (P-body, nuage, sponge body or polar granules) and P-body-like neuronal RNPs. Consequently it interacts with a wide variety of proteins, some of which appear to be common interactive partners in almost all RNPs types i.e. cup and tral, whereas other interactions are specific to a germ granule/RNP. Core functional components in me31B-containing RNPs include RNA regulatory proteins (such as translational repressor, RNA-decapping and exonuclease proteins), RNA localization proteins and additional proteins depending on the biological context of the RNPs. In the P-body RNPs, interacts with at least the translation repressor proteins tral, cup and Edc3, and the mRNA localization factor yps. Interaction with tral or Edc3 is required for translation repression and possibly RNA decapping; binding to tral and Edc3 is mutually exclusive. In the nuage and germ plasm polar granule RNPs, interacts with at least tral, cup, and additional proteins required for assembly and function of the germ granules such as tud, vas and aub. Interacts (when dimethylated on Arg residues) with tud; interaction is RNA-independent. Component of the osk RNP complex, which is composed of at least me31B, exu, yps, aret/bruno, cup, and the mRNA of osk. Component of the nanos RNP complex, which is composed of at least smg, cup, tral, me31B, the CCR4-NOT complex members Rga/NOT2 and Caf1-55, and the mRNA of nanos (nos). Interacts with tral and piRNA pathway components papi and AGO3; promotes interaction between nuage RNPs and the piRNA-mediated transposon silencing. Forms a RNP containing at least me31B, eIF4E1, cup, tral and pAbp; this interaction is required for the translational silencing of maternal mRNAs during the maternal-to-zygotic transition. In the sponge body, forms a RNP containing at least me31B, exu, yps and the mRNA of osk; interactions with exu and yps are RNA dependent. Component of a neuronal RNP, at least composed of me31B, tral and Fmr1. Component of the Atx2-Not1 repressor complex, composed of at least me31B, Atx2, tyf and pAbp. Interacts (via the C-terminus) with Atx2, tyf, pAbp and Lsm12a. Interacts (via RecA-like domain 2) with 4EHP-GYF2 complex member Gyf (via the me31B binding motif). Interacts with 4E-T, Edc3 and Patr-1. Symmetrically dimethylated on arginine residues. In terms of tissue distribution, ubiquitously expressed throughout the brain (at protein level). Expressed in the olfactory system including the antennal lobes, projection neurons, local interneurons, mushroom-body Kenyon cells and glial cells (at protein level).

Its subcellular location is the cytoplasm. It localises to the cytoplasmic ribonucleoprotein granule. The protein localises to the P-body. It is found in the endoplasmic reticulum. The protein resides in the cell projection. Its subcellular location is the dendrite. It carries out the reaction ATP + H2O = ADP + phosphate + H(+). Its function is as follows. ATP-dependent RNA helicase which is a core component of a variety of ribonucleoprotein complexes (RNPs) that play critical roles in translational repression and mRNA decapping during embryogenesis, oogenesis, neurogenesis and neurotransmission. Recruits core components and translational repressors to some RNP complexes, and mediates RNP aggregation into processing granules such as P-bodies. As part of a RNP complex containing tral, eIF4E1, cup, and pAbp, involved in RNP-mediated translational repression of maternal mRNAs during oogenesis and embryogenesis. As part of a RNP complex containing tral and the RNA localization factors exu and yps, mediates translational silencing of mRNAs such as osk/oskar and bcd/bicoid during their transport to the oocyte in order to prevent their translation until they reach their positional destinations. In neurons and possibly imaginal disks, involved in miRNA-mediated translational repression, possibly in association with components of the piRNA transposon silencing pathway. Involved in RNA localization and protein trafficking in the oocyte. As part of an ER-associated RNP containing tral, cup and yps, required for tral-dependent ER exit site formation and consequently efficient trafficking of proteins such as grk and yl through the secretory pathway. Component of neuron RNPs that mediate transport and translation of neuronal RNAs, including translation repression of synaptic transcripts in preparation for their dendritic targeting. As part of the Atx2-Not1 repressor complex promotes Not1-dependent post-transcriptional gene silencing in adult circadian pacemaker neurons in order to sustain high-amplitude circadian rhythms and Pdf cycling in a per-independent manner. Promotes the interaction between Atx2 and Not1 within the Atx2-Not1 RNP complex. Recruited to the 4EHP-GYF2 complex by Gyf, where it plays a role in 4EHP-GYF2 mediated translational repression and mRNA decay. The sequence is that of ATP-dependent RNA helicase me31b (me31B) from Drosophila melanogaster (Fruit fly).